An 831-amino-acid polypeptide reads, in one-letter code: Histone acetyltransferase SAS3 (831 aa).

Positions 267–573 constitute an MYST-type HAT domain; it reads VWFSQIEYIV…VKYDKLLWEP (307 aa). The C2HC MYST-type zinc finger occupies 300 to 325; sequence VFICEFCLKYMTSRYTFYRHQLKCLT. An N6-acetyllysine; by autocatalysis modification is found at Lys367. Acetyl-CoA-binding positions include 419 to 421 and 426 to 432; these read ILT and QRKGYGQ. The Proton donor/acceptor role is filled by Glu452. Residue Ser456 participates in acetyl-CoA binding. Disordered regions lie at residues 614 to 639 and 719 to 813; these read ENYNNSRAHNKRRRRRRRSSEHKTSK and PLGN…SHIR. The segment covering 621-633 has biased composition (basic residues); it reads AHNKRRRRRRRSS. Composition is skewed to acidic residues over residues 736–746 and 755–794; these read EQDEVENDVDT and KEDEDEDEDFTLDDDIEDEQISEENDEEEDTYEEDSDDDE. Residues 795-812 show a composition bias toward basic and acidic residues; it reads DGKRKGQEQDENDIESHI.

This sequence belongs to the MYST (SAS/MOZ) family. In terms of assembly, component of the NuA3 histone acetyltransferase (HAT) complex. The NuA3 HAT complex has 2 functionally distinct forms that participate in transcription. The NuA3a HAT complex is composed of at least NTO1, SAS3, TAF14, YNG1 and EAF6. The NuA3b HAT complex contains an additional subunit, PDP3. SAS3 interacts with CDC68/SPT16. Autoacetylation at Lys-367 is required for proper function.

The protein localises to the nucleus. It carries out the reaction L-lysyl-[protein] + acetyl-CoA = N(6)-acetyl-L-lysyl-[protein] + CoA + H(+). Catalytic component of the NuA3 histone acetyltransferase complex, that acetylates H3K14. The NuA3 HAT complex has 2 functionally distinct forms. NuA3a binds H3K4me3, through the PHD finger of YNG1, and acetylates H3K14 at the promoter region of actively transcribed genes to promote transcription initiation. NuA3b binds H3K36me3 at the coding regions of actively transcribed genes, through the PWWP domain of PDP3, and coordinates transcription elongation. In vitro, SAS3 acetylates free histones H3 and H4. It is involved in silencing the HMR locus. The chain is Histone acetyltransferase SAS3 from Saccharomyces cerevisiae (strain ATCC 204508 / S288c) (Baker's yeast).